A 295-amino-acid chain; its full sequence is Mitochondrial dicarboxylate transporter (295 aa).

Solcar repeat units follow at residues 4–88 (KQVK…LKEH), 96–188 (TNMW…FKNF), and 198–286 (KKNS…LKKY). 6 consecutive transmembrane segments (helical) span residues 8 to 24 (YPWW…VMNT), 63 to 82 (GLSA…FGMY), 98 to 122 (MWYL…ADLI), 163 to 182 (GWKP…VVTY), 204 to 224 (LTSS…ADVI), and 262 to 280 (WVPS…FFAM).

This sequence belongs to the mitochondrial carrier (TC 2.A.29) family. Homodimer.

The protein localises to the mitochondrion inner membrane. Its function is as follows. Mitochondrial dicarboxylic transporter catalyzing the exchange of dicarboxylic acids like malate and succinate for inorganic phosphate. Required for growth on ethanol and acetate. This is Mitochondrial dicarboxylate transporter (DIC1) from Candida glabrata (strain ATCC 2001 / BCRC 20586 / JCM 3761 / NBRC 0622 / NRRL Y-65 / CBS 138) (Yeast).